The following is a 458-amino-acid chain: GDP-fucose protein O-fucosyltransferase 3 (458 aa).

Topologically, residues 1-11 (MRRISVKKLCS) are cytoplasmic. The chain crosses the membrane as a helical; Signal-anchor for type II membrane protein span at residues 12–32 (FCLCACAFAFLVMTFQVIELL). Residues 33-458 (GQFEQTEHRQ…TQFWREVFTD (426 aa)) lie on the Lumenal side of the membrane. N-linked (GlcNAc...) asparagine glycans are attached at residues asparagine 92, asparagine 150, and asparagine 300. The cysteines at positions 371 and 374 are disulfide-linked. The N-linked (GlcNAc...) asparagine glycan is linked to asparagine 445.

This sequence belongs to the glycosyltransferase 10 family.

The protein localises to the endoplasmic reticulum membrane. The catalysed reaction is L-threonyl-[protein] + GDP-beta-L-fucose = 3-O-(alpha-L-fucosyl)-L-threonyl-[protein] + GDP + H(+). It catalyses the reaction L-seryl-[protein] + GDP-beta-L-fucose = 3-O-(alpha-L-fucosyl)-L-seryl-[protein] + GDP + H(+). The protein operates within protein modification; protein glycosylation. Its function is as follows. Protein O-fucosyltransferase that specifically catalyzes O-fucosylation of serine or threonine residues in EMI domains of target proteins. Attaches fucose through an O-glycosidic linkage. O-fucosylation of EMI domain-containing proteins may be required for facilitating protein folding and secretion. The chain is GDP-fucose protein O-fucosyltransferase 3 (fut10) from Danio rerio (Zebrafish).